The sequence spans 528 residues: Na(+)/H(+) antiporter NhaB (528 aa).

Transmembrane regions (helical) follow at residues 29-49 (LIIN…LLVI), 52-72 (IFTL…LLAI), 95-115 (VLLL…LLLF), 139-159 (AFLS…AVAV), 203-223 (LLMH…VGEP), 248-268 (VPVF…KIFG), 304-324 (AFIG…VGLI), 349-369 (EEAL…AVII), 390-410 (LVIF…VFVG), 448-468 (ATPN…APLI), and 476-496 (VWMA…AIEL).

This sequence belongs to the NhaB Na(+)/H(+) (TC 2.A.34) antiporter family.

It is found in the cell inner membrane. It catalyses the reaction 2 Na(+)(in) + 3 H(+)(out) = 2 Na(+)(out) + 3 H(+)(in). Functionally, na(+)/H(+) antiporter that extrudes sodium in exchange for external protons. This Shewanella woodyi (strain ATCC 51908 / MS32) protein is Na(+)/H(+) antiporter NhaB.